A 424-amino-acid chain; its full sequence is Light-independent protochlorophyllide reductase subunit N (424 aa).

The [4Fe-4S] cluster site is built by cysteine 27, cysteine 52, and cysteine 113.

Belongs to the BchN/ChlN family. In terms of assembly, protochlorophyllide reductase is composed of three subunits; BchL, BchN and BchB. Forms a heterotetramer of two BchB and two BchN subunits. It depends on [4Fe-4S] cluster as a cofactor.

The enzyme catalyses chlorophyllide a + oxidized 2[4Fe-4S]-[ferredoxin] + 2 ADP + 2 phosphate = protochlorophyllide a + reduced 2[4Fe-4S]-[ferredoxin] + 2 ATP + 2 H2O. Its pathway is porphyrin-containing compound metabolism; bacteriochlorophyll biosynthesis (light-independent). In terms of biological role, component of the dark-operative protochlorophyllide reductase (DPOR) that uses Mg-ATP and reduced ferredoxin to reduce ring D of protochlorophyllide (Pchlide) to form chlorophyllide a (Chlide). This reaction is light-independent. The NB-protein (BchN-BchB) is the catalytic component of the complex. The sequence is that of Light-independent protochlorophyllide reductase subunit N from Halorhodospira halophila (strain DSM 244 / SL1) (Ectothiorhodospira halophila (strain DSM 244 / SL1)).